A 371-amino-acid polypeptide reads, in one-letter code: UDP-N-acetylglucosamine--N-acetylmuramyl-(pentapeptide) pyrophosphoryl-undecaprenol N-acetylglucosamine transferase (371 aa).

Residues 15–17 (TGG), N126, R172, S199, I256, 275–280 (ALTVSE), and Q301 each bind UDP-N-acetyl-alpha-D-glucosamine.

This sequence belongs to the glycosyltransferase 28 family. MurG subfamily.

The protein resides in the cell inner membrane. It catalyses the reaction di-trans,octa-cis-undecaprenyl diphospho-N-acetyl-alpha-D-muramoyl-L-alanyl-D-glutamyl-meso-2,6-diaminopimeloyl-D-alanyl-D-alanine + UDP-N-acetyl-alpha-D-glucosamine = di-trans,octa-cis-undecaprenyl diphospho-[N-acetyl-alpha-D-glucosaminyl-(1-&gt;4)]-N-acetyl-alpha-D-muramoyl-L-alanyl-D-glutamyl-meso-2,6-diaminopimeloyl-D-alanyl-D-alanine + UDP + H(+). Its pathway is cell wall biogenesis; peptidoglycan biosynthesis. Its function is as follows. Cell wall formation. Catalyzes the transfer of a GlcNAc subunit on undecaprenyl-pyrophosphoryl-MurNAc-pentapeptide (lipid intermediate I) to form undecaprenyl-pyrophosphoryl-MurNAc-(pentapeptide)GlcNAc (lipid intermediate II). In Francisella tularensis subsp. holarctica (strain FTNF002-00 / FTA), this protein is UDP-N-acetylglucosamine--N-acetylmuramyl-(pentapeptide) pyrophosphoryl-undecaprenol N-acetylglucosamine transferase.